Consider the following 448-residue polypeptide: Allantoinase (448 aa).

Zn(2+) is bound by residues H60, H62, K147, H183, H239, and D312. K147 is modified (N6-carboxylysine).

The protein belongs to the metallo-dependent hydrolases superfamily. Allantoinase family. Homotetramer. Zn(2+) is required as a cofactor. In terms of processing, carboxylation allows a single lysine to coordinate two zinc ions.

It carries out the reaction (S)-allantoin + H2O = allantoate + H(+). The protein operates within nitrogen metabolism; (S)-allantoin degradation; allantoate from (S)-allantoin: step 1/1. Its function is as follows. Catalyzes the conversion of allantoin (5-ureidohydantoin) to allantoic acid by hydrolytic cleavage of the five-member hydantoin ring. This is Allantoinase from Deinococcus radiodurans (strain ATCC 13939 / DSM 20539 / JCM 16871 / CCUG 27074 / LMG 4051 / NBRC 15346 / NCIMB 9279 / VKM B-1422 / R1).